Here is a 193-residue protein sequence, read N- to C-terminus: Peptidyl-tRNA hydrolase (193 aa).

Position 17 (Y17) interacts with tRNA. Catalysis depends on H22, which acts as the Proton acceptor. Residues Y68, N70, and N116 each coordinate tRNA.

It belongs to the PTH family. In terms of assembly, monomer.

It localises to the cytoplasm. It catalyses the reaction an N-acyl-L-alpha-aminoacyl-tRNA + H2O = an N-acyl-L-amino acid + a tRNA + H(+). In terms of biological role, hydrolyzes ribosome-free peptidyl-tRNAs (with 1 or more amino acids incorporated), which drop off the ribosome during protein synthesis, or as a result of ribosome stalling. Functionally, catalyzes the release of premature peptidyl moieties from peptidyl-tRNA molecules trapped in stalled 50S ribosomal subunits, and thus maintains levels of free tRNAs and 50S ribosomes. In Acinetobacter baumannii (strain AB0057), this protein is Peptidyl-tRNA hydrolase.